A 194-amino-acid chain; its full sequence is Large ribosomal subunit protein eL15 (194 aa).

Positions 162-194 are disordered; the sequence is LTSAGRKSRGLRNKGKGAEKVRPSVRANKGKTK. The span at 167 to 176 shows a compositional bias: basic residues; it reads RKSRGLRNKG.

The protein belongs to the eukaryotic ribosomal protein eL15 family.

The chain is Large ribosomal subunit protein eL15 from Thermococcus onnurineus (strain NA1).